Here is a 556-residue protein sequence, read N- to C-terminus: 2-succinyl-5-enolpyruvyl-6-hydroxy-3-cyclohexene-1-carboxylate synthase (556 aa).

The protein belongs to the TPP enzyme family. MenD subfamily. In terms of assembly, homodimer. It depends on Mg(2+) as a cofactor. Mn(2+) is required as a cofactor. The cofactor is thiamine diphosphate.

The enzyme catalyses isochorismate + 2-oxoglutarate + H(+) = 5-enolpyruvoyl-6-hydroxy-2-succinyl-cyclohex-3-ene-1-carboxylate + CO2. It participates in quinol/quinone metabolism; 1,4-dihydroxy-2-naphthoate biosynthesis; 1,4-dihydroxy-2-naphthoate from chorismate: step 2/7. The protein operates within quinol/quinone metabolism; menaquinone biosynthesis. Catalyzes the thiamine diphosphate-dependent decarboxylation of 2-oxoglutarate and the subsequent addition of the resulting succinic semialdehyde-thiamine pyrophosphate anion to isochorismate to yield 2-succinyl-5-enolpyruvyl-6-hydroxy-3-cyclohexene-1-carboxylate (SEPHCHC). The chain is 2-succinyl-5-enolpyruvyl-6-hydroxy-3-cyclohexene-1-carboxylate synthase from Salmonella dublin (strain CT_02021853).